The chain runs to 227 residues: Type II restriction enzyme HhaII (227 aa).

In terms of assembly, homodimer.

The catalysed reaction is Endonucleolytic cleavage of DNA to give specific double-stranded fragments with terminal 5'-phosphates.. Functionally, a P subtype restriction enzyme that recognizes the double-stranded sequence 5'-GANTC-3' and cleaves after G-1. This is Type II restriction enzyme HhaII (hhaIIR) from Haemophilus parahaemolyticus.